The following is a 541-amino-acid chain: Thioredoxin reductase (541 aa).

Residues 51–52, 71–74, 87–88, 92–96, Ala161, Asp357, and 364–366 contribute to the FAD site; these read PG, DYVK, TC, GCVPK, and ELA. A disulfide bridge links Cys88 with Cys93. Positions 438 to 452 are loop important for the interaction with TRX1; that stretch reads HRQKHIRAQKDEYDL. His509 serves as a coordination point for FAD. The active-site Proton acceptor is the His509. Cysteines 535 and 540 form a disulfide.

It belongs to the class-I pyridine nucleotide-disulfide oxidoreductase family. Homodimer. Requires FAD as cofactor.

It localises to the cytoplasm. The enzyme catalyses [thioredoxin]-dithiol + NADP(+) = [thioredoxin]-disulfide + NADPH + H(+). Its function is as follows. Catalyzes the transfer of electrons from NADPH to thioredoxins TRX1, TRX2 and TRX3, which in turn act as reductants of disulfide containing proteins. Able to reduce nitroglutathione (GSNO), a compound involved in the transport of nitric oxide (NO); however, TRX1 is more efficient in reducing GSNO. Has no catalytic activity towards oxidized glutathione (GSSG). This Plasmodium falciparum (isolate FCH-5) protein is Thioredoxin reductase.